A 172-amino-acid chain; its full sequence is Adenine phosphoribosyltransferase (172 aa).

It belongs to the purine/pyrimidine phosphoribosyltransferase family. In terms of assembly, homodimer.

Its subcellular location is the cytoplasm. The enzyme catalyses AMP + diphosphate = 5-phospho-alpha-D-ribose 1-diphosphate + adenine. The protein operates within purine metabolism; AMP biosynthesis via salvage pathway; AMP from adenine: step 1/1. Its function is as follows. Catalyzes a salvage reaction resulting in the formation of AMP, that is energically less costly than de novo synthesis. This chain is Adenine phosphoribosyltransferase, found in Streptococcus agalactiae serotype Ia (strain ATCC 27591 / A909 / CDC SS700).